The sequence spans 1031 residues: Sodium/potassium-transporting ATPase subunit alpha (1031 aa).

Residues 1 to 33 (MADPGDLESRGKADSYSVAEKKSAPKKISKKNA) are disordered. Positions 7-23 (LESRGKADSYSVAEKKS) are enriched in basic and acidic residues. Positions 24–33 (APKKISKKNA) are enriched in basic residues. Transmembrane regions (helical) follow at residues 102 to 123 (MFGG…AFGI), 136 to 155 (LYLG…FSYY), 297 to 319 (FIHI…SLAM), and 326 to 354 (AIIF…TLTA). Asp-382 serves as the catalytic 4-aspartylphosphate intermediate. Lys-512 is an ATP binding site. Mg(2+) is bound by residues Asp-725 and Asp-729. 4 helical membrane-spanning segments follow: residues 795 to 818 (ISPF…ILCI), 857 to 882 (LISL…IILA), 924 to 944 (LTCQ…DLII), and 961 to 986 (FLNF…NTGL).

Belongs to the cation transport ATPase (P-type) (TC 3.A.3) family. Type IIC subfamily. The sodium/potassium-transporting ATPase is composed of a catalytic alpha subunit, an auxiliary non-catalytic beta subunit and an additional regulatory subunit.

The protein resides in the cell membrane. The enzyme catalyses K(+)(out) + Na(+)(in) + ATP + H2O = K(+)(in) + Na(+)(out) + ADP + phosphate + H(+). This alpha subunit is resistant to ouabain. Its function is as follows. This is the catalytic component of the active enzyme, which catalyzes the hydrolysis of ATP coupled with the exchange of sodium and potassium ions across the plasma membrane. This action creates the electrochemical gradient of sodium and potassium ions, providing the energy for active transport of various nutrients. The protein is Sodium/potassium-transporting ATPase subunit alpha of Hydra vulgaris (Hydra).